The primary structure comprises 441 residues: MTDSGWKIILAPEYASEVRKFEEHGTVLSSKDQFHGDIPGFEPFNAGSLIELQLVKYMAKKSCSKSAGHVFSSLSLESGRVVQEMCSDDPNWRPIQAESTAVRMIAHLTAAVFAGRQLCRNSEWIDITIQYSLTAMVAAEQLWRWPRLARRMAARFLPSCRLLSAQVQRANELVSTTSQARKDETTATQQAGMEQSTSYHDGLEWMEEYARGRPYRPGVTQLAVTLGAVDTTKDLLMQVLYDIAGKSDLMDALRREIVAIVSEHGWTKTTIVNLQLMDSMIKESQRLKPVGISKLSGIRRTAASDIHLSDGGIVPKNVPFEISNMHMWDDADLYPDPLSFQADRFLRLRQVPGHEATAQLASLSADHLGWGLGKNACPGRFFVAMEVKVLLCHLILKYDWRLEDGCISEVRRYGTFLSADPEGTLLVRRRREEVDLDGPLV.

Residues Ser-175–Gln-195 are disordered. Residues Thr-186–Gln-195 show a composition bias toward polar residues. Cys-377 is a heme binding site.

It belongs to the cytochrome P450 family. Heme is required as a cofactor.

It catalyses the reaction campesine D + reduced [NADPH--hemoprotein reductase] + O2 = campesine G + oxidized [NADPH--hemoprotein reductase] + 2 H2O + H(+). Its pathway is alkaloid biosynthesis. Cytochrome P450 monooxygenase; part of the gene cluster that mediates the biosynthesis of campesine G, a dimeric indole piperazine alkaloid that shows good insecticidal activity Galleria mellonella. Within the pathway, cpsC catalyzes regioselective dehydrogenation reaction towards C2-N1 of the (2H)-indole ring of campesine D to yield the final product, campesine G. The non-canonical non-ribosomal peptide synthetase cpsA catalyzes the first steps of the pathway by producing L-tryptophanal and L-valinal from their respective amino-acids. These products condensate spontaneously to form trypyl-valyl pyrazine also known as didehydrocampesine A. The NmrA-like family domain-containing oxidoreductase cpsB is the next enzyme in cps pathway and reduces the unstable didehydrocampesine A to campesine A. The methyltransferase cpsF and the acetyltransferase cpsE both recognize N13 of piperazine ring to carry out methylation and acetylation of campesine A to produce campesine C and B, respectively. The cytochrome P450 monooxygenase cpsD then acts as a dimerase that catalyzes oxidative heterocoupling between campesine B and C to produce heterodimers with unexpected 6/5/6/6/6/6/5/6 eight-ring scaffold called campesine D. Finally,the cytochrome P450 monooxygenase cpsC is a regioselective dehydrogenase that catalyzes dehydrogenation reaction towards C2-N1 to produce campesine G. This is Cytochrome P450 monooxygenase cpsC from Aspergillus campestris (strain IBT 28561).